The primary structure comprises 722 residues: BTB/POZ domain-containing protein 9 (722 aa).

The BTB domain maps to 46–112 (ADVEFIVEEE…IYSGTLLLST (67 aa)). The 97-residue stretch at 151 to 247 (CMILDAARLY…MNLEHLLQVV (97 aa)) folds into the BACK domain. Residues 565–593 (QDKNYLKKIADMEKEREKREKEKKTAKTD) adopt a coiled-coil conformation. Residues 577 to 594 (EKEREKREKEKKTAKTDD) show a composition bias toward basic and acidic residues. 2 disordered regions span residues 577 to 626 (EKER…VLRS) and 640 to 722 (PLTP…RETL). A compositionally biased stretch (polar residues) spans 597–606 (IASTSGSSLA). Residues 607–626 (SGHAESPSTSSSSSQSVLRS) show a composition bias toward low complexity. The span at 641-658 (LTPPALSPPGTPALPAPL) shows a compositional bias: pro residues. Positions 670 to 679 (EQNQPSNISA) are enriched in polar residues. The span at 686–704 (SPSSRSNPSPSLSRSRSQS) shows a compositional bias: low complexity.

In terms of tissue distribution, detected in the brain (at protein level).

It is found in the cytoplasm. Essential for the homeostatic regulation of sleep and motor activity, by depressing hyperactivity and wakefulness. May function, at least in part, by ensuring dopamine biosynthesis. This chain is BTB/POZ domain-containing protein 9, found in Drosophila melanogaster (Fruit fly).